The chain runs to 438 residues: GTPase Der (438 aa).

EngA-type G domains are found at residues 3-168 (PLIA…PCPE) and 179-354 (IKLA…INRR). GTP contacts are provided by residues 9–16 (GRPNVGKS), 56–60 (DTGGY), 120–123 (NKVD), 185–192 (GRPNVGKS), 232–236 (DTAGL), and 297–300 (NKWD). The region spanning 355 to 438 (QKISTSNLNR…LPITMRFLRK (84 aa)) is the KH-like domain.

It belongs to the TRAFAC class TrmE-Era-EngA-EngB-Septin-like GTPase superfamily. EngA (Der) GTPase family. Associates with the 50S ribosomal subunit.

Its function is as follows. GTPase that plays an essential role in the late steps of ribosome biogenesis. The chain is GTPase Der from Chlorobaculum parvum (strain DSM 263 / NCIMB 8327) (Chlorobium vibrioforme subsp. thiosulfatophilum).